The primary structure comprises 352 residues: Chorismate synthase (352 aa).

Arg-48 is an NADP(+) binding site. Residues Arg-125 to Ser-127, Asn-238 to Ala-239, Gly-278, Lys-293 to Ser-297, and Arg-319 contribute to the FMN site.

Belongs to the chorismate synthase family. As to quaternary structure, homotetramer. Requires FMNH2 as cofactor.

It carries out the reaction 5-O-(1-carboxyvinyl)-3-phosphoshikimate = chorismate + phosphate. It functions in the pathway metabolic intermediate biosynthesis; chorismate biosynthesis; chorismate from D-erythrose 4-phosphate and phosphoenolpyruvate: step 7/7. Functionally, catalyzes the anti-1,4-elimination of the C-3 phosphate and the C-6 proR hydrogen from 5-enolpyruvylshikimate-3-phosphate (EPSP) to yield chorismate, which is the branch point compound that serves as the starting substrate for the three terminal pathways of aromatic amino acid biosynthesis. This reaction introduces a second double bond into the aromatic ring system. The sequence is that of Chorismate synthase from Legionella pneumophila subsp. pneumophila (strain Philadelphia 1 / ATCC 33152 / DSM 7513).